The sequence spans 353 residues: GTPase Obg (353 aa).

One can recognise an Obg domain in the interval 1–159 (MKFLDEAKVY…RWIWLRLKLI (159 aa)). The region spanning 160–327 (ADAGLVGLPN…ALRALVAVIG (168 aa)) is the OBG-type G domain. GTP contacts are provided by residues 166 to 173 (GLPNAGKS), 191 to 195 (FTTLH), 212 to 215 (DIPG), 279 to 282 (NKID), and 308 to 310 (SGV). 2 residues coordinate Mg(2+): Ser173 and Thr193.

Belongs to the TRAFAC class OBG-HflX-like GTPase superfamily. OBG GTPase family. As to quaternary structure, monomer. Mg(2+) is required as a cofactor.

It is found in the cytoplasm. An essential GTPase which binds GTP, GDP and possibly (p)ppGpp with moderate affinity, with high nucleotide exchange rates and a fairly low GTP hydrolysis rate. Plays a role in control of the cell cycle, stress response, ribosome biogenesis and in those bacteria that undergo differentiation, in morphogenesis control. The protein is GTPase Obg of Rhodopseudomonas palustris (strain ATCC BAA-98 / CGA009).